A 590-amino-acid polypeptide reads, in one-letter code: Protein phosphatase PP2A regulatory subunit A (590 aa).

HEAT repeat units lie at residues 12-50 (PIAV…TRDE), 89-127 (LLSP…LEQY), 206-244 (FIPL…EIRH), 246-284 (LLQP…IKDE), 285-323 (LIKP…VLEE), 324-362 (IIPV…TTEY), 363-401 (LLPM…LSQS), 402-440 (LLPA…FNEK), 480-518 (IIPK…IEKQ), 519-551 (ILPT…VLAA), and 562-590 (IIPL…QTND).

This sequence belongs to the phosphatase 2A regulatory subunit A family. As to quaternary structure, PP2A exists in several trimeric forms, all of which consist of a core composed of a catalytic subunit associated with a 65 kDa (PR65) (Subunit A) and a 55 kDa (PR55) (Subunit B) regulatory subunit.

Its function is as follows. Phosphatase 2A affects a variety of biological processes in the cell such as transcription, cell cycle progression and cellular morphogenesis, and provides an initial identification of critical substrates for this phosphatase. The regulatory subunit may direct the catalytic subunit to distinct, albeit overlapping, subsets of substrates. The polypeptide is Protein phosphatase PP2A regulatory subunit A (paa1) (Schizosaccharomyces pombe (strain 972 / ATCC 24843) (Fission yeast)).